Here is a 277-residue protein sequence, read N- to C-terminus: F420-dependent methylenetetrahydromethanopterin dehydrogenase (277 aa).

This sequence belongs to the MTD family.

The enzyme catalyses 5,10-methylenetetrahydromethanopterin + oxidized coenzyme F420-(gamma-L-Glu)(n) + 2 H(+) = 5,10-methenyl-5,6,7,8-tetrahydromethanopterin + reduced coenzyme F420-(gamma-L-Glu)(n). The protein operates within one-carbon metabolism; methanogenesis from CO(2); 5,10-methylene-5,6,7,8-tetrahydromethanopterin from 5,10-methenyl-5,6,7,8-tetrahydromethanopterin (coenzyme F420 route): step 1/1. Its function is as follows. Catalyzes the reversible reduction of methenyl-H(4)MPT(+) to methylene-H(4)MPT. This Methanococcus maripaludis (strain C5 / ATCC BAA-1333) protein is F420-dependent methylenetetrahydromethanopterin dehydrogenase.